The primary structure comprises 339 residues: Ketol-acid reductoisomerase (NADP(+)) (339 aa).

The KARI N-terminal Rossmann domain occupies 1–182; sequence MRVYYDRDAD…GGGRSGIIET (182 aa). Residues 24 to 27, K48, S51, T53, and 83 to 86 each bind NADP(+); these read YGSQ and DELQ. Residue H108 is part of the active site. G134 is an NADP(+) binding site. The 146-residue stretch at 183–328 folds into the KARI C-terminal knotted domain; it reads NFREECETDL…AKLRGMMPWI (146 aa). Mg(2+) contacts are provided by D191, E195, E227, and E231. Residue S252 coordinates substrate.

This sequence belongs to the ketol-acid reductoisomerase family. The cofactor is Mg(2+).

The enzyme catalyses (2R)-2,3-dihydroxy-3-methylbutanoate + NADP(+) = (2S)-2-acetolactate + NADPH + H(+). It carries out the reaction (2R,3R)-2,3-dihydroxy-3-methylpentanoate + NADP(+) = (S)-2-ethyl-2-hydroxy-3-oxobutanoate + NADPH + H(+). The protein operates within amino-acid biosynthesis; L-isoleucine biosynthesis; L-isoleucine from 2-oxobutanoate: step 2/4. It functions in the pathway amino-acid biosynthesis; L-valine biosynthesis; L-valine from pyruvate: step 2/4. Involved in the biosynthesis of branched-chain amino acids (BCAA). Catalyzes an alkyl-migration followed by a ketol-acid reduction of (S)-2-acetolactate (S2AL) to yield (R)-2,3-dihydroxy-isovalerate. In the isomerase reaction, S2AL is rearranged via a Mg-dependent methyl migration to produce 3-hydroxy-3-methyl-2-ketobutyrate (HMKB). In the reductase reaction, this 2-ketoacid undergoes a metal-dependent reduction by NADPH to yield (R)-2,3-dihydroxy-isovalerate. The protein is Ketol-acid reductoisomerase (NADP(+)) of Rhizobium etli (strain ATCC 51251 / DSM 11541 / JCM 21823 / NBRC 15573 / CFN 42).